A 334-amino-acid polypeptide reads, in one-letter code: RNA ligase 2 (334 aa).

Residues 1-234 are adenylyltransferase; that stretch reads MFKKYSSLEN…KCKNSKFSEK (234 aa). AMP-binding residues include Glu34, Lys35, Ile36, Asn40, Arg55, and Glu99. Lys35 (N6-AMP-lysine intermediate) is an active-site residue. Ile162, Leu164, Asn166, Glu204, and Tyr206 together coordinate Mg(2+). 2 residues coordinate AMP: Lys225 and Lys227.

The protein belongs to the RNA ligase 2 family. Mg(2+) is required as a cofactor. Requires Mn(2+) as cofactor.

It carries out the reaction ATP + (ribonucleotide)n-3'-hydroxyl + 5'-phospho-(ribonucleotide)m = (ribonucleotide)n+m + AMP + diphosphate.. Repairs 3'-OH/5'-PO4 nicks in duplex RNA or RNA:DNA hybrid in which the broken 3'-OH strand is RNA. The nick ligation reaction entails three nucleotidyl transfer steps. In the first step, the RNA ligase reacts with ATP in the absence of nucleic acid to form a covalent ligase-AMP intermediate and release pyrophosphate. In step 2, the ligase-AMP binds to the nicked duplex nucleic acid and transfers the adenylate to the 5'-PO4 terminus to form an adenylylated nicked intermediate. In step 3, the RNA ligase directs the attack of the nick 3'-OH on the 5'-phosphoanhydride linkage, resulting in a repaired 3' - 5' phosphodiester and release of AMP. This chain is RNA ligase 2 (Y10A), found in Enterobacteria phage T4 (Bacteriophage T4).